A 217-amino-acid polypeptide reads, in one-letter code: Cytidylate kinase (217 aa).

Position 10–18 (10–18 (GPAGAGKST)) interacts with ATP.

Belongs to the cytidylate kinase family. Type 1 subfamily.

Its subcellular location is the cytoplasm. It carries out the reaction CMP + ATP = CDP + ADP. It catalyses the reaction dCMP + ATP = dCDP + ADP. The protein is Cytidylate kinase of Clostridium botulinum (strain ATCC 19397 / Type A).